A 204-amino-acid polypeptide reads, in one-letter code: Ras-related protein R-Ras2 (204 aa).

N-acetylalanine is present on A2. Residue 21 to 29 participates in GTP binding; that stretch reads GGGGVGKSA. Positions 43–51 match the Effector region motif; the sequence is YDPTIEDSY. Residues 68 to 72, 127 to 130, and 157 to 159 contribute to the GTP site; these read DTAGQ, NKAD, and SAK. At S186 the chain carries Phosphoserine. 4 N6-palmitoyl lysine lipidation sites follow: K192, K194, K196, and K197. C199 carries the S-palmitoyl cysteine lipid modification. C201 is modified (cysteine methyl ester). The S-farnesyl cysteine moiety is linked to residue C201. Positions 202–204 are cleaved as a propeptide — removed in mature form; the sequence is VIF.

It belongs to the small GTPase superfamily. Ras family. In terms of assembly, interacts with RASSF5. In terms of processing, may be post-translationally modified by both palmitoylation and polyisoprenylation. Post-translationally, fatty-acylation at Lys-192, Lys-194; lys-196 and Lys-197 is required for localization to the plasma membrane and activity. Defatty-acylated by SIRT6, affecting its localization to the plasma membrane. As to expression, ubiquitously present in all tissues examined, with the highest levels in heart, placenta, and skeletal muscle. Moderate levels in lung and liver; low levels in brain, kidney, and pancreas.

It localises to the cell membrane. It is found in the golgi apparatus membrane. It catalyses the reaction GTP + H2O = GDP + phosphate + H(+). Its function is as follows. GTP-binding protein with GTPase activity, involved in the regulation of MAPK signaling pathway and thereby controlling multiple cellular processes. Regulates craniofacial development. The sequence is that of Ras-related protein R-Ras2 from Homo sapiens (Human).